The following is a 237-amino-acid chain: Urease accessory protein UreF (237 aa).

It belongs to the UreF family. As to quaternary structure, ureD, UreF and UreG form a complex that acts as a GTP-hydrolysis-dependent molecular chaperone, activating the urease apoprotein by helping to assemble the nickel containing metallocenter of UreC. The UreE protein probably delivers the nickel.

Its subcellular location is the cytoplasm. Functionally, required for maturation of urease via the functional incorporation of the urease nickel metallocenter. The chain is Urease accessory protein UreF from Streptococcus salivarius (strain 57.I).